Reading from the N-terminus, the 221-residue chain is Thiamine-phosphate synthase (221 aa).

Residues 39–43 and Asn-76 each bind 4-amino-2-methyl-5-(diphosphooxymethyl)pyrimidine; that span reads QLRCK. Mg(2+)-binding residues include Asp-77 and Asp-96. Ser-114 provides a ligand contact to 4-amino-2-methyl-5-(diphosphooxymethyl)pyrimidine. 140–142 provides a ligand contact to 2-[(2R,5Z)-2-carboxy-4-methylthiazol-5(2H)-ylidene]ethyl phosphate; that stretch reads TPT. Lys-143 contributes to the 4-amino-2-methyl-5-(diphosphooxymethyl)pyrimidine binding site. 2-[(2R,5Z)-2-carboxy-4-methylthiazol-5(2H)-ylidene]ethyl phosphate is bound at residue Gly-171.

Belongs to the thiamine-phosphate synthase family. The cofactor is Mg(2+).

The enzyme catalyses 2-[(2R,5Z)-2-carboxy-4-methylthiazol-5(2H)-ylidene]ethyl phosphate + 4-amino-2-methyl-5-(diphosphooxymethyl)pyrimidine + 2 H(+) = thiamine phosphate + CO2 + diphosphate. It catalyses the reaction 2-(2-carboxy-4-methylthiazol-5-yl)ethyl phosphate + 4-amino-2-methyl-5-(diphosphooxymethyl)pyrimidine + 2 H(+) = thiamine phosphate + CO2 + diphosphate. It carries out the reaction 4-methyl-5-(2-phosphooxyethyl)-thiazole + 4-amino-2-methyl-5-(diphosphooxymethyl)pyrimidine + H(+) = thiamine phosphate + diphosphate. The protein operates within cofactor biosynthesis; thiamine diphosphate biosynthesis; thiamine phosphate from 4-amino-2-methyl-5-diphosphomethylpyrimidine and 4-methyl-5-(2-phosphoethyl)-thiazole: step 1/1. In terms of biological role, condenses 4-methyl-5-(beta-hydroxyethyl)thiazole monophosphate (THZ-P) and 2-methyl-4-amino-5-hydroxymethyl pyrimidine pyrophosphate (HMP-PP) to form thiamine monophosphate (TMP). This chain is Thiamine-phosphate synthase, found in Deinococcus geothermalis (strain DSM 11300 / CIP 105573 / AG-3a).